A 269-amino-acid chain; its full sequence is Ribosomal RNA small subunit methyltransferase J (269 aa).

S-adenosyl-L-methionine contacts are provided by residues 125-126 (ER) and aspartate 179.

It belongs to the methyltransferase superfamily. RsmJ family.

Its subcellular location is the cytoplasm. The catalysed reaction is guanosine(1516) in 16S rRNA + S-adenosyl-L-methionine = N(2)-methylguanosine(1516) in 16S rRNA + S-adenosyl-L-homocysteine + H(+). In terms of biological role, specifically methylates the guanosine in position 1516 of 16S rRNA. This chain is Ribosomal RNA small subunit methyltransferase J, found in Pseudomonas savastanoi pv. phaseolicola (strain 1448A / Race 6) (Pseudomonas syringae pv. phaseolicola (strain 1448A / Race 6)).